The primary structure comprises 153 residues: NADH dehydrogenase [ubiquinone] 1 beta subcomplex subunit 11, mitochondrial (153 aa).

The transit peptide at 1-29 (MAAGLFGLSARLLLAAAATRGLPAARVRW) directs the protein to the mitochondrion. The tract at residues 40–77 (PSAVAGKRPPEPTTQWQEDPEPEDENLYEKNPDSHGYD) is disordered. A compositionally biased stretch (basic and acidic residues) spans 66–77 (LYEKNPDSHGYD). The chain crosses the membrane as a helical span at residues 89-109 (LVFFFGVSIILVLGSTFVAYL).

It belongs to the complex I NDUFB11 subunit family. As to quaternary structure, complex I is composed of 45 different subunits. Interacts with BCAP31.

The protein localises to the mitochondrion inner membrane. Functionally, accessory subunit of the mitochondrial membrane respiratory chain NADH dehydrogenase (Complex I), that is believed not to be involved in catalysis. Complex I functions in the transfer of electrons from NADH to the respiratory chain. The immediate electron acceptor for the enzyme is believed to be ubiquinone. In Pan troglodytes (Chimpanzee), this protein is NADH dehydrogenase [ubiquinone] 1 beta subcomplex subunit 11, mitochondrial (NDUFB11).